A 1456-amino-acid polypeptide reads, in one-letter code: DNA polymerase gamma, mitochondrial (1456 aa).

A mitochondrion-targeting transit peptide spans 1–41 (MLTPVRCRTVPNATVATAARVLRRANLFSRYPRQLGHLRWD). Disordered stretches follow at residues 1200-1266 (APEM…SLDD) and 1308-1443 (AVTT…SWKP). Low complexity predominate over residues 1204-1239 (AAVPSTSSESKSKASATTSTTTTENATASPSSSSNV). The segment covering 1315–1325 (PEPPTNPPPVA) has biased composition (pro residues). 2 stretches are compositionally biased toward low complexity: residues 1346–1371 (PKNP…TPKP) and 1411–1428 (TASV…ATAT).

Belongs to the DNA polymerase type-A family. Requires Mg(2+) as cofactor.

Its subcellular location is the mitochondrion. It carries out the reaction DNA(n) + a 2'-deoxyribonucleoside 5'-triphosphate = DNA(n+1) + diphosphate. Its function is as follows. Involved in the replication of mitochondrial DNA. The chain is DNA polymerase gamma, mitochondrial (mip-1) from Neurospora crassa (strain ATCC 24698 / 74-OR23-1A / CBS 708.71 / DSM 1257 / FGSC 987).